Consider the following 234-residue polypeptide: Lipoprotein-releasing system ATP-binding protein LolD (234 aa).

Residues 13–233 (IYLHEIKRQY…SLSDGQVVEL (221 aa)) enclose the ABC transporter domain. ATP is bound at residue 49–56 (APSGSGKS).

Belongs to the ABC transporter superfamily. Lipoprotein translocase (TC 3.A.1.125) family. In terms of assembly, the complex is composed of two ATP-binding proteins (LolD) and two transmembrane proteins (LolC and LolE).

The protein localises to the cell inner membrane. Part of the ABC transporter complex LolCDE involved in the translocation of mature outer membrane-directed lipoproteins, from the inner membrane to the periplasmic chaperone, LolA. Responsible for the formation of the LolA-lipoprotein complex in an ATP-dependent manner. In Bradyrhizobium diazoefficiens (strain JCM 10833 / BCRC 13528 / IAM 13628 / NBRC 14792 / USDA 110), this protein is Lipoprotein-releasing system ATP-binding protein LolD.